Here is a 205-residue protein sequence, read N- to C-terminus: MADFTNNALKKFKLVFLGEQSVGKTSIITRFMYDSFDNTYQATIGIDFLSKTMYLEDRTIRLQLWDTAGQERFRSLIPSYIRDSSVAVVVYDITNANSFHQTTKWVDDVRNERGCDVIIVLVGNKTDLADKRQVSTEDGEKKARDLNVMFIETSAKAGYNVKQLFRKIATALPGIVQEETPEQPNIVIMNPPKDAEESQGRQCPC.

GTP is bound by residues 18-25 (GEQSVGKT), Thr43, 66-70 (DTAGQ), and 124-127 (NKTD). S-geranylgeranyl cysteine attachment occurs at residues Cys203 and Cys205. Position 205 is a cysteine methyl ester (Cys205).

It belongs to the small GTPase superfamily. Rab family. In terms of assembly, interacts with GARP complex component vps-52. Highly expressed in body wall muscle, intestine, somatic gonad, distal tip cells, vulva, and neurons including AVB, AVD, RIG, and PVC (at protein level). Not expressed in AVA and RMDV neurons.

The protein localises to the cell membrane. The protein resides in the cell projection. It localises to the dendrite. Its subcellular location is the perikaryon. It is found in the golgi apparatus. The protein localises to the cytoplasmic vesicle. The protein resides in the secretory vesicle. The small GTPases Rab are key regulators of intracellular membrane trafficking, from the formation of transport vesicles to their fusion with membranes. Rabs cycle between an inactive GDP-bound form and an active GTP-bound form that is able to recruit to membranes different set of downstream effectors directly responsible for vesicle formation, movement, tethering and fusion. In its active GTP-bound form, acts redundantly with rab-6.2 (in its active GTP-bound form) to positively regulate the retrograde trafficking of cargo molecules from endosomes to Golgi structures. Required for the retrograde trafficking of glr-1, a subunit of AMPA-type glutamate receptors (AMPRs), out of early endosomes and into the Golgi compartment in neurons. Together with rab-6.2, promotes the retrograde trafficking of mig-14 from endosomes to Golgi structures in the intestine. In oocytes, in its active GTP-bound form, involved in the membrane fusion and exocytosis of secretory vesicles (cortical granules) to play a role in the remodeling of the embryo surface following fertilization. Recruits sep-1 to cortical granules (derived from the Golgi complex) for exocytosis during the oocyte-to-embryo transition. Required for seam cell division and alae formation. Promotes spontaneous reversals in locomotion. This Caenorhabditis elegans protein is Ras-related protein rab-6.1.